We begin with the raw amino-acid sequence, 353 residues long: Photosystem II D2 protein (353 aa).

Thr-2 is subject to N-acetylthreonine. Thr-2 carries the phosphothreonine modification. The chain crosses the membrane as a helical span at residues 41–61 (CAYFALGGWFTGTTFVTSWYT). Position 118 (His-118) interacts with chlorophyll a. The helical transmembrane segment at 125 to 141 (GFMLRQFELARSVQLRP) threads the bilayer. Positions 130 and 143 each coordinate pheophytin a. The chain crosses the membrane as a helical span at residues 153 to 166 (VFVSVSLIYPLGQA). Chlorophyll a is bound at residue His-198. Residues 208-228 (AALLCAIHGATVENTLFEDGD) traverse the membrane as a helical segment. A plastoquinone contacts are provided by His-215 and Phe-262. His-215 provides a ligand contact to Fe cation. Residue His-269 coordinates Fe cation. The chain crosses the membrane as a helical span at residues 279 to 295 (GLWMSAIGVVGLALNLR).

It belongs to the reaction center PufL/M/PsbA/D family. In terms of assembly, PSII is composed of 1 copy each of membrane proteins PsbA, PsbB, PsbC, PsbD, PsbE, PsbF, PsbH, PsbI, PsbJ, PsbK, PsbL, PsbM, PsbT, PsbX, PsbY, PsbZ, Psb30/Ycf12, at least 3 peripheral proteins of the oxygen-evolving complex and a large number of cofactors. It forms dimeric complexes. It depends on The D1/D2 heterodimer binds P680, chlorophylls that are the primary electron donor of PSII, and subsequent electron acceptors. It shares a non-heme iron and each subunit binds pheophytin, quinone, additional chlorophylls, carotenoids and lipids. There is also a Cl(-1) ion associated with D1 and D2, which is required for oxygen evolution. The PSII complex binds additional chlorophylls, carotenoids and specific lipids. as a cofactor.

The protein localises to the plastid. It localises to the chloroplast thylakoid membrane. The enzyme catalyses 2 a plastoquinone + 4 hnu + 2 H2O = 2 a plastoquinol + O2. Its function is as follows. Photosystem II (PSII) is a light-driven water:plastoquinone oxidoreductase that uses light energy to abstract electrons from H(2)O, generating O(2) and a proton gradient subsequently used for ATP formation. It consists of a core antenna complex that captures photons, and an electron transfer chain that converts photonic excitation into a charge separation. The D1/D2 (PsbA/PsbD) reaction center heterodimer binds P680, the primary electron donor of PSII as well as several subsequent electron acceptors. D2 is needed for assembly of a stable PSII complex. This is Photosystem II D2 protein from Angiopteris evecta (Mule's foot fern).